The sequence spans 69 residues: uncharacterized protein (69 aa).

Helical transmembrane passes span 7 to 29 (LLSG…LGSI) and 44 to 66 (ALQV…LGLL).

The protein localises to the cell membrane. This is an uncharacterized protein from Archaeoglobus fulgidus (strain ATCC 49558 / DSM 4304 / JCM 9628 / NBRC 100126 / VC-16).